Consider the following 65-residue polypeptide: Putative antitoxin PF2058 (65 aa).

It belongs to the UPF0165 family.

Its function is as follows. Possibly the antitoxin component of a type II toxin-antitoxin (TA) system. The polypeptide is Putative antitoxin PF2058 (Pyrococcus furiosus (strain ATCC 43587 / DSM 3638 / JCM 8422 / Vc1)).